Here is a 331-residue protein sequence, read N- to C-terminus: Phosphate acyltransferase (331 aa).

It belongs to the PlsX family. Homodimer. Probably interacts with PlsY.

The protein localises to the cytoplasm. The enzyme catalyses a fatty acyl-[ACP] + phosphate = an acyl phosphate + holo-[ACP]. The protein operates within lipid metabolism; phospholipid metabolism. Catalyzes the reversible formation of acyl-phosphate (acyl-PO(4)) from acyl-[acyl-carrier-protein] (acyl-ACP). This enzyme utilizes acyl-ACP as fatty acyl donor, but not acyl-CoA. The polypeptide is Phosphate acyltransferase (Clostridium acetobutylicum (strain ATCC 824 / DSM 792 / JCM 1419 / IAM 19013 / LMG 5710 / NBRC 13948 / NRRL B-527 / VKM B-1787 / 2291 / W)).